Consider the following 207-residue polypeptide: Ribosomal RNA large subunit methyltransferase E (207 aa).

G60, W62, D80, D96, and D121 together coordinate S-adenosyl-L-methionine. The active-site Proton acceptor is K161.

It belongs to the class I-like SAM-binding methyltransferase superfamily. RNA methyltransferase RlmE family.

Its subcellular location is the cytoplasm. It catalyses the reaction uridine(2552) in 23S rRNA + S-adenosyl-L-methionine = 2'-O-methyluridine(2552) in 23S rRNA + S-adenosyl-L-homocysteine + H(+). Specifically methylates the uridine in position 2552 of 23S rRNA at the 2'-O position of the ribose in the fully assembled 50S ribosomal subunit. The sequence is that of Ribosomal RNA large subunit methyltransferase E from Marinobacter nauticus (strain ATCC 700491 / DSM 11845 / VT8) (Marinobacter aquaeolei).